A 171-amino-acid polypeptide reads, in one-letter code: Ly6/PLAUR domain-containing protein 6 (171 aa).

The N-terminal stretch at 1-25 is a signal peptide; the sequence is MEPSPALAWLLLLSLVADCLKAAQS. Residues 47-141 form the UPAR/Ly6 domain; sequence FKCFTCEKAA…PRNDTDATFA (95 aa). 6 cysteine pairs are disulfide-bonded: Cys-49–Cys-77, Cys-52–Cys-61, Cys-70–Cys-96, Cys-102–Cys-121, Cys-107–Cys-118, and Cys-122–Cys-127. Residues 88–90 carry the NxI motif motif; sequence NSI. Asn-134 and Asn-147 each carry an N-linked (GlcNAc...) asparagine glycan. A lipid anchor (GPI-anchor amidated asparagine) is attached at Asn-147. Positions 148 to 171 are cleaved as a propeptide — removed in mature form; that stretch reads QTNGHPHCVSVIVSCLWVWLGLTL.

In terms of assembly, interacts with nicotinic acetylcholine receptors (nAChRs) including CHRNA3, CHRNA4, CHRNA5, CHRNA6, CHRNA7, CHRNB2 and CHRNB4. Interacts (via NxI motif) with LRP6. As to expression, expressed at high levels in the cortex and cerebellum of the brain, at moderate levels in the lung, kidney, and liver, and at low levels in the heart and prostate (at protein level). Expressed in neurons (at protein level).

The protein resides in the secreted. The protein localises to the cytoplasm. It localises to the cell membrane. It is found in the synapse. Its subcellular location is the synaptosome. The protein resides in the membrane raft. The protein localises to the cell projection. It localises to the dendrite. It is found in the perikaryon. Functionally, acts as a modulator of nicotinic acetylcholine receptors (nAChRs) function in the brain. Inhibits nicotine-induced Ca(2+) influx through nAChRs. In vitro, specifically inhibits alpha-3:beta-4 and alpha-7 nAChR currents in an allosteric manner. Acts as a positive regulator of Wnt/beta-catenin signaling. The sequence is that of Ly6/PLAUR domain-containing protein 6 (Lypd6) from Rattus norvegicus (Rat).